Reading from the N-terminus, the 136-residue chain is Large ribosomal subunit protein bL19 (136 aa).

The protein belongs to the bacterial ribosomal protein bL19 family.

Its function is as follows. This protein is located at the 30S-50S ribosomal subunit interface and may play a role in the structure and function of the aminoacyl-tRNA binding site. This chain is Large ribosomal subunit protein bL19, found in Xylella fastidiosa (strain M23).